Here is a 207-residue protein sequence, read N- to C-terminus: Suppressor of IKBKE 1 (207 aa).

Coiled-coil stretches lie at residues 70–102 and 164–192; these read HILL…DALE and CKVQ…ESLQ.

Belongs to the SIKE family. As to quaternary structure, interacts with IKBKE and TBK1 via its coiled coil region. Interaction with TBK1 is disrupted upon viral infection or TLR3 stimulation. Interacts with CDC42BPB. Interacts with SIKE1 which mediates association with the STRIPAK core complex composed of PP2A catalytic and scaffolding subunits, the striatins (PP2A regulatory subunits), the striatin-associated proteins MOB4, STRIP1 and STRIP2, PDCD10 and members of the STE20 kinases, such as STK24 and STK26.

It localises to the cytoplasm. Functionally, physiological suppressor of IKK-epsilon and TBK1 that plays an inhibitory role in virus- and TLR3-triggered IRF3. Inhibits TLR3-mediated activation of interferon-stimulated response elements (ISRE) and the IFN-beta promoter. May act by disrupting the interactions of IKBKE or TBK1 with TICAM1/TRIF, IRF3 and RIGI. Does not inhibit NF-kappa-B activation pathways. Associates with the striatin-interacting phosphatase and kinase (STRIPAK) core complex, forming the extended (SIKE1:SLMAP)STRIPAK complex. The (SIKE1:SLMAP)STRIPAK complex dephosphorylates STK3 leading to the inhibition of Hippo signaling and the control of cell growth. This is Suppressor of IKBKE 1 (Sike1) from Mus musculus (Mouse).